Consider the following 700-residue polypeptide: Sex comb on midleg-like protein 2 (700 aa).

The segment at 1–33 (MGQTVNEDSMDVKKENQEKTPQSSTSSVQRDDF) is disordered. Positions 19–28 (KTPQSSTSSV) are enriched in polar residues. MBT repeat units lie at residues 33–131 (FHWE…LQPP) and 139–240 (SSWP…LQPP). Over residues 253–281 (TESSPSEASQHSMQSPQKTTLILPTQQVR) the composition is skewed to polar residues. 2 disordered regions span residues 253-320 (TESS…EKPL) and 466-550 (PFSS…SSLN). Ser256, Ser261, Ser267, Ser299, and Ser300 each carry phosphoserine. A Phosphothreonine modification is found at Thr305. The span at 476–495 (SSAEHDKNQSAKEDVTERQS) shows a compositional bias: basic and acidic residues. A Phosphoserine modification is found at Ser499. Thr503 is subject to Phosphothreonine. Residue Ser511 is modified to Phosphoserine. Lys518 participates in a covalent cross-link: Glycyl lysine isopeptide (Lys-Gly) (interchain with G-Cter in SUMO2). Ser522 is subject to Phosphoserine. Basic and acidic residues predominate over residues 535–545 (PKEENLSEDSK). Lys536 participates in a covalent cross-link: Glycyl lysine isopeptide (Lys-Gly) (interchain with G-Cter in SUMO2). Phosphoserine is present on residues Ser570, Ser583, Ser590, and Ser594. A compositionally biased stretch (polar residues) spans 575-584 (RSVPGTTSSP). The tract at residues 575–594 (RSVPGTTSSPLVGDISPKSS) is disordered. Residues Lys599 and Lys605 each participate in a glycyl lysine isopeptide (Lys-Gly) (interchain with G-Cter in SUMO2) cross-link. The SAM domain maps to 631–700 (WSVDEVIQFM…IEKLKEGKYS (70 aa)).

It belongs to the SCM family. Highly expressed in placenta, thymus and testis. Detected at lower levels in brain, liver, skeletal muscle, pancreas and ovary.

It localises to the nucleus. Putative Polycomb group (PcG) protein. PcG proteins act by forming multiprotein complexes, which are required to maintain the transcriptionally repressive state of homeotic genes throughout development. The protein is Sex comb on midleg-like protein 2 (SCML2) of Homo sapiens (Human).